Consider the following 328-residue polypeptide: GTP 3',8-cyclase (328 aa).

The 221-residue stretch at 9–229 (GFGRDVRYLR…DNGLNTGGPA (221 aa)) folds into the Radical SAM core domain. R18 is a GTP binding site. Residues C25 and C29 each contribute to the [4Fe-4S] cluster site. Y31 contacts S-adenosyl-L-methionine. C32 is a [4Fe-4S] cluster binding site. R60 is a binding site for GTP. Position 64 (G64) interacts with S-adenosyl-L-methionine. Residue T94 participates in GTP binding. S-adenosyl-L-methionine is bound at residue S118. K154 lines the GTP pocket. M188 contributes to the S-adenosyl-L-methionine binding site. 2 residues coordinate [4Fe-4S] cluster: C252 and C255. 257-259 (RVR) is a binding site for GTP. C269 contacts [4Fe-4S] cluster.

It belongs to the radical SAM superfamily. MoaA family. Monomer and homodimer. [4Fe-4S] cluster serves as cofactor.

The enzyme catalyses GTP + AH2 + S-adenosyl-L-methionine = (8S)-3',8-cyclo-7,8-dihydroguanosine 5'-triphosphate + 5'-deoxyadenosine + L-methionine + A + H(+). Its pathway is cofactor biosynthesis; molybdopterin biosynthesis. Functionally, catalyzes the cyclization of GTP to (8S)-3',8-cyclo-7,8-dihydroguanosine 5'-triphosphate. The sequence is that of GTP 3',8-cyclase from Rhodobacter capsulatus (Rhodopseudomonas capsulata).